The primary structure comprises 144 residues: Ninjurin-2 (144 aa).

The Extracellular segment spans residues 1 to 62 (MESDREIIHL…KSVLEQGPFS (62 aa)). The tract at residues 27-39 (NHYATKKSVAESM) is helix alpha1. The tract at residues 40 to 59 (LDVALFMSNAMRLKSVLEQG) is helix alpha2. A helical membrane pass occupies residues 63–94 (QYYTTLLTLISASLLLQVVIGILLVVIARLNL). At 95–98 (NEVE) the chain is on the cytoplasmic side. The chain crosses the membrane as a helical span at residues 99–128 (NQWRLNQLNNAATTLVFITVVINIFITAFG). Gln-105 is a binding site for cholesterol. At 129-144 (AHKTGSVAARTSSNPI) the chain is on the extracellular side.

Belongs to the ninjurin family. Homooligomer; in response to stimuli, homooligomerizes into filaments. In contrast to NINJ1, the filament is curved toward the intracellular space, preventing its circularization on a relatively flat membrane to mediate plasma membrane rupture: curvature is caused by cholesterol-binding at the cytoplasmic leaflet.

It is found in the cell membrane. In terms of biological role, its role in unclear. In contrast to NINJ1 paralog, does not mediate plasma membrane rupture (cytolysis) downstream of necroptotic and pyroptotic programmed cell death. While it is able to oligomerize and form filaments, filaments are curved toward the intracellular space, preventing circularization to mediate plasma membrane rupture. May act as a homophilic transmembrane adhesion molecule involved in nerve regeneration. Promotes axonal growth. The protein is Ninjurin-2 (Ninj2) of Rattus norvegicus (Rat).